The sequence spans 222 residues: Histone H1.5 (222 aa).

The span at Met-1–Glu-16 shows a compositional bias: low complexity. Positions Met-1–Gly-55 are disordered. Ser-2 carries the post-translational modification N-acetylserine. Ser-2 bears the Phosphoserine mark. Lys-17 carries the post-translational modification N6-acetyllysine. Ser-18 bears the Phosphoserine mark. A compositionally biased stretch (basic residues) spans Ala-20–Ala-34. Lys-26 bears the N6-methyllysine mark. Residue Lys-33 is modified to N6-(beta-hydroxybutyryl)lysine; alternate. An N6-succinyllysine; alternate modification is found at Lys-33. Thr-35 carries the post-translational modification Phosphothreonine. An H15 domain is found at Thr-35–Lys-108. Lys-45 is subject to N6-acetyllysine. Lys-51 carries the post-translational modification N6-(beta-hydroxybutyryl)lysine. Arg-53 carries the citrulline modification. Residue Lys-63 is modified to N6-(beta-hydroxybutyryl)lysine. Lys-74 carries the N6-acetyllysine modification. Residues Lys-84, Lys-89, and Lys-105 each carry the N6-(beta-hydroxybutyryl)lysine modification. A disordered region spans residues Gln-94 to Lys-222. A compositionally biased stretch (basic residues) spans Lys-118–Lys-129. 2 positions are modified to phosphothreonine: Thr-134 and Thr-151. Over residues Lys-136–Lys-157 the composition is skewed to basic residues. Lys-164 bears the N6-acetyllysine mark. Residues Lys-165 to Thr-183 are compositionally biased toward basic residues. Residues Ser-169 and Ser-185 each carry the phosphoserine modification. Basic residues predominate over residues Lys-190–Lys-222.

The protein belongs to the histone H1/H5 family. In terms of assembly, interacts with MSX1. H1 histones are progressively phosphorylated during the cell cycle, becoming maximally phosphorylated during late G2 phase and M phase, and being dephosphorylated sharply thereafter. Post-translationally, citrullination at Arg-53 (H1R54ci) by PADI4 takes place within the DNA-binding site of H1 and results in its displacement from chromatin and global chromatin decondensation, thereby promoting pluripotency and stem cell maintenance.

It is found in the nucleus. Its subcellular location is the chromosome. In terms of biological role, histone H1 protein binds to linker DNA between nucleosomes forming the macromolecular structure known as the chromatin fiber. Histones H1 are necessary for the condensation of nucleosome chains into higher-order structured fibers. Also acts as a regulator of individual gene transcription through chromatin remodeling, nucleosome spacing and DNA methylation. The sequence is that of Histone H1.5 (H1-5) from Rattus norvegicus (Rat).